A 206-amino-acid chain; its full sequence is MKPIQARIYLASRSPRRRELLRQIGVQFELLAFRGGERGKDADVDETPHPGEPVERYVERLALTKAEAGCRRLQWRSLPHHAVLGADTTLELEGQIIGKPVDASDAAAILHQLSGRTHRVLTAVALSDGSRTRSRTSISEVRFRPLDDDEIRHYVATGEPMDKAGAYGIQGRAALFIEEIRGSYTGIMGLPLFETAQLLESFGYPL.

The Proton acceptor role is filled by D87.

This sequence belongs to the Maf family. YhdE subfamily. The cofactor is a divalent metal cation.

Its subcellular location is the cytoplasm. It carries out the reaction dTTP + H2O = dTMP + diphosphate + H(+). The enzyme catalyses UTP + H2O = UMP + diphosphate + H(+). Nucleoside triphosphate pyrophosphatase that hydrolyzes dTTP and UTP. May have a dual role in cell division arrest and in preventing the incorporation of modified nucleotides into cellular nucleic acids. The sequence is that of dTTP/UTP pyrophosphatase from Aromatoleum aromaticum (strain DSM 19018 / LMG 30748 / EbN1) (Azoarcus sp. (strain EbN1)).